We begin with the raw amino-acid sequence, 349 residues long: Fructose-1,6-bisphosphatase class 1 (349 aa).

Mg(2+) contacts are provided by glutamate 91, aspartate 110, leucine 112, and aspartate 113. Residues 113 to 116 (DGSS) and asparagine 205 contribute to the substrate site. Glutamate 277 serves as a coordination point for Mg(2+).

Belongs to the FBPase class 1 family. As to quaternary structure, homotetramer. Mg(2+) is required as a cofactor.

Its subcellular location is the cytoplasm. It carries out the reaction beta-D-fructose 1,6-bisphosphate + H2O = beta-D-fructose 6-phosphate + phosphate. It participates in carbohydrate biosynthesis; gluconeogenesis. This chain is Fructose-1,6-bisphosphatase class 1, found in Rhizobium meliloti (strain 1021) (Ensifer meliloti).